Here is a 170-residue protein sequence, read N- to C-terminus: Ribosome maturation factor RimM (170 aa).

A PRC barrel domain is found at E96–L169.

Belongs to the RimM family. In terms of assembly, binds ribosomal protein uS19.

Its subcellular location is the cytoplasm. Its function is as follows. An accessory protein needed during the final step in the assembly of 30S ribosomal subunit, possibly for assembly of the head region. Essential for efficient processing of 16S rRNA. May be needed both before and after RbfA during the maturation of 16S rRNA. It has affinity for free ribosomal 30S subunits but not for 70S ribosomes. The sequence is that of Ribosome maturation factor RimM from Sorangium cellulosum (strain So ce56) (Polyangium cellulosum (strain So ce56)).